We begin with the raw amino-acid sequence, 87 residues long: Venom serine protease inhibitor (87 aa).

Positions 1–23 (MPRLVLVSFLFLAIFSVFIGGFA) are cleaved as a signal peptide. 5 cysteine pairs are disulfide-bonded: Cys27–Cys61, Cys36–Cys57, Cys40–Cys53, Cys44–Cys81, and Cys63–Cys75. Residues 27 to 81 (CPRNEIFTRCHAACQPSCARLARKPFCIKICKPGCICTSGYLRNKNNVCVPRSRC) enclose the TIL domain.

This sequence belongs to the serine protease inhibitor-like (TIL domain-containing) family. Specifically expressed by the venom gland.

It localises to the secreted. Functionally, antifibrinolytic and antimicrobial serine protease inhibitor. Inhibits trypsin, plasmin and microbial serine proteases but not chymotrypsin, thrombin and elastase. Inhibits the plasmin-mediated degradation of fibrin to fibrin degradation products. Also binds to bacterial and fungal surfaces and exhibits antimicrobial activity against fungi as well as Gram-positive and Gram-negative bacteria. The sequence is that of Venom serine protease inhibitor from Apis cerana (Indian honeybee).